Consider the following 487-residue polypeptide: Chromosomal replication initiator protein DnaA (487 aa).

A domain I, interacts with DnaA modulators region spans residues Met-1–Gly-79. The tract at residues Val-78–Arg-138 is disordered. The domain II stretch occupies residues Gly-79–Ser-150. A domain III, AAA+ region region spans residues Phe-151–Ala-367. Gly-195, Gly-197, Lys-198, and Thr-199 together coordinate ATP. The segment at His-368–Thr-487 is domain IV, binds dsDNA.

This sequence belongs to the DnaA family. As to quaternary structure, oligomerizes as a right-handed, spiral filament on DNA at oriC.

The protein localises to the cytoplasm. Plays an essential role in the initiation and regulation of chromosomal replication. ATP-DnaA binds to the origin of replication (oriC) to initiate formation of the DNA replication initiation complex once per cell cycle. Binds the DnaA box (a 9 base pair repeat at the origin) and separates the double-stranded (ds)DNA. Forms a right-handed helical filament on oriC DNA; dsDNA binds to the exterior of the filament while single-stranded (ss)DNA is stabiized in the filament's interior. The ATP-DnaA-oriC complex binds and stabilizes one strand of the AT-rich DNA unwinding element (DUE), permitting loading of DNA polymerase. After initiation quickly degrades to an ADP-DnaA complex that is not apt for DNA replication. Binds acidic phospholipids. This Marinobacter nauticus (strain ATCC 700491 / DSM 11845 / VT8) (Marinobacter aquaeolei) protein is Chromosomal replication initiator protein DnaA.